A 326-amino-acid polypeptide reads, in one-letter code: Beta-ketoacyl-[acyl-carrier-protein] synthase III (326 aa).

Catalysis depends on residues cysteine 112 and histidine 251. Residues 252–256 (QANSR) are ACP-binding. Asparagine 281 is a catalytic residue.

It belongs to the thiolase-like superfamily. FabH family. As to quaternary structure, homodimer.

Its subcellular location is the cytoplasm. The catalysed reaction is malonyl-[ACP] + acetyl-CoA + H(+) = 3-oxobutanoyl-[ACP] + CO2 + CoA. The protein operates within lipid metabolism; fatty acid biosynthesis. Catalyzes the condensation reaction of fatty acid synthesis by the addition to an acyl acceptor of two carbons from malonyl-ACP. Catalyzes the first condensation reaction which initiates fatty acid synthesis and may therefore play a role in governing the total rate of fatty acid production. Possesses both acetoacetyl-ACP synthase and acetyl transacylase activities. Its substrate specificity determines the biosynthesis of branched-chain and/or straight-chain of fatty acids. The chain is Beta-ketoacyl-[acyl-carrier-protein] synthase III from Clostridium botulinum (strain Okra / Type B1).